Here is a 326-residue protein sequence, read N- to C-terminus: Septum site-determining protein minD homolog, chloroplastic (326 aa).

A chloroplast-targeting transit peptide spans 1–62; the sequence is MASLRLFSTN…LAGETPRIVV (62 aa). 67 to 74 is a binding site for ATP; sequence KGGVGKTT.

It belongs to the ParA family. MinD subfamily. In terms of assembly, homodimer. Interacts with MINE1. Binds to ARC3. Interacts with MCD1. Interacts with CDP1/PARC6.

The protein localises to the plastid. It localises to the chloroplast inner membrane. With respect to regulation, stimulated ATPase activity by MINE1. Its function is as follows. Together with ARC3 and MCD1, regulates FtsZ ring positioning in chloroplasts in an ARC6-dependent manner. Calcium-dependent ATPase required for the correct placement of the plastid division site. Inhibits FtsZ filament and ring formation in the plastid. Mediates inhibition of plastid division. In cooperation with MINE1, prevents FtsZ ring formation anywhere outside of the mid-plastids. The protein is Septum site-determining protein minD homolog, chloroplastic of Arabidopsis thaliana (Mouse-ear cress).